Here is a 365-residue protein sequence, read N- to C-terminus: Aminomethyltransferase (365 aa).

This sequence belongs to the GcvT family. In terms of assembly, the glycine cleavage system is composed of four proteins: P, T, L and H.

It catalyses the reaction N(6)-[(R)-S(8)-aminomethyldihydrolipoyl]-L-lysyl-[protein] + (6S)-5,6,7,8-tetrahydrofolate = N(6)-[(R)-dihydrolipoyl]-L-lysyl-[protein] + (6R)-5,10-methylene-5,6,7,8-tetrahydrofolate + NH4(+). Its function is as follows. The glycine cleavage system catalyzes the degradation of glycine. The protein is Aminomethyltransferase of Frankia alni (strain DSM 45986 / CECT 9034 / ACN14a).